We begin with the raw amino-acid sequence, 433 residues long: Serine/threonine-protein kinase DCLK1 (433 aa).

The tract at residues 1–74 is disordered; it reads MLELIEVNGT…GEEESDEGFQ (74 aa). Ser-23, Ser-25, Ser-27, Ser-30, Ser-40, Ser-45, Ser-46, Ser-48, Ser-57, and Ser-69 each carry phosphoserine. Positions 40–57 are enriched in low complexity; sequence SQHGGSSTSLSSTKVCSS. The segment covering 59-71 has biased composition (acidic residues); the sequence is DENDGPGEEESDE. Residues 83 to 340 enclose the Protein kinase domain; that stretch reads YKVGRTIGDG…AVQVLEHPWV (258 aa). ATP contacts are provided by residues 89 to 97 and Lys-112; that span reads IGDGNFAVV. Catalysis depends on Asp-204, which acts as the Proton acceptor. Phosphotyrosine is present on Tyr-213. The segment covering 388-400 has biased composition (basic and acidic residues); sequence QVFRRRRNQDVRG. Residues 388–433 form a disordered region; the sequence is QVFRRRRNQDVRGRYKAQPAPPELNSESEDYSPSSSETVRSPNSPF. 3 positions are modified to phosphoserine: Ser-419, Ser-428, and Ser-431.

It belongs to the protein kinase superfamily. CAMK Ser/Thr protein kinase family. CaMK subfamily.

It catalyses the reaction L-seryl-[protein] + ATP = O-phospho-L-seryl-[protein] + ADP + H(+). The enzyme catalyses L-threonyl-[protein] + ATP = O-phospho-L-threonyl-[protein] + ADP + H(+). Its function is as follows. Probable kinase that may be involved in a calcium-signaling pathway controlling neuronal migration in the developing brain. May also participate in functions of the mature nervous system. This Rattus norvegicus (Rat) protein is Serine/threonine-protein kinase DCLK1 (Dclk1).